A 260-amino-acid polypeptide reads, in one-letter code: tRNA pseudouridine synthase C (260 aa).

The active site involves aspartate 54.

It belongs to the pseudouridine synthase RluA family.

The enzyme catalyses uridine(65) in tRNA = pseudouridine(65) in tRNA. Functionally, responsible for synthesis of pseudouridine from uracil-65 in transfer RNAs. The chain is tRNA pseudouridine synthase C (truC) from Salmonella typhimurium (strain LT2 / SGSC1412 / ATCC 700720).